Consider the following 437-residue polypeptide: Gamma-glutamyl phosphate reductase (437 aa).

It belongs to the gamma-glutamyl phosphate reductase family.

Its subcellular location is the cytoplasm. The catalysed reaction is L-glutamate 5-semialdehyde + phosphate + NADP(+) = L-glutamyl 5-phosphate + NADPH + H(+). Its pathway is amino-acid biosynthesis; L-proline biosynthesis; L-glutamate 5-semialdehyde from L-glutamate: step 2/2. Catalyzes the NADPH-dependent reduction of L-glutamate 5-phosphate into L-glutamate 5-semialdehyde and phosphate. The product spontaneously undergoes cyclization to form 1-pyrroline-5-carboxylate. The protein is Gamma-glutamyl phosphate reductase of Synechococcus sp. (strain CC9902).